Consider the following 252-residue polypeptide: Large ribosomal subunit protein uL30 (252 aa).

The protein belongs to the universal ribosomal protein uL30 family.

Binds to G-rich structures in 28S rRNA and in mRNAs. Plays a regulatory role in the translation apparatus; inhibits cell-free translation of mRNAs. The chain is Large ribosomal subunit protein uL30 (RpL7) from Drosophila melanogaster (Fruit fly).